The sequence spans 219 residues: Octanoyltransferase (219 aa).

The BPL/LPL catalytic domain maps to 32–207 (ADSGDEIWLL…HLVRQLGYAQ (176 aa)). Residues 71 to 78 (RGGQVTYH), 138 to 140 (SLG), and 151 to 153 (GLA) each bind substrate. The Acyl-thioester intermediate role is filled by Cys-169.

It belongs to the LipB family.

It is found in the cytoplasm. It catalyses the reaction octanoyl-[ACP] + L-lysyl-[protein] = N(6)-octanoyl-L-lysyl-[protein] + holo-[ACP] + H(+). It functions in the pathway protein modification; protein lipoylation via endogenous pathway; protein N(6)-(lipoyl)lysine from octanoyl-[acyl-carrier-protein]: step 1/2. In terms of biological role, catalyzes the transfer of endogenously produced octanoic acid from octanoyl-acyl-carrier-protein onto the lipoyl domains of lipoate-dependent enzymes. Lipoyl-ACP can also act as a substrate although octanoyl-ACP is likely to be the physiological substrate. The sequence is that of Octanoyltransferase from Stutzerimonas stutzeri (strain A1501) (Pseudomonas stutzeri).